A 468-amino-acid polypeptide reads, in one-letter code: Zinc finger CCCH domain-containing protein 32 (468 aa).

Positions 1 to 25 are disordered; the sequence is MYARNPPLNGSQSAQAPDWTPADAD. 5 C3H1-type zinc fingers span residues 45 to 73, 90 to 118, 136 to 164, 289 to 317, and 335 to 363; these read RPGA…HPRD, RFGE…HPKN, REGD…HPQP, RPGE…HPRD, and RPGV…HPMG.

Its subcellular location is the nucleus. The protein is Zinc finger CCCH domain-containing protein 32 of Arabidopsis thaliana (Mouse-ear cress).